Here is a 234-residue protein sequence, read N- to C-terminus: MRYITVEDLSFYYDKEPVLEHINYCVDSGEFVTLTGENGAAKTTLIKASLGILQPRIGKVAISKTNTQGKKLRIAYLPQQIASFNAGFPSTVYEFVKSGRYPRKGWFRRLNAHDEEHIKASLDSVGMWEHRDKRLGSLSGGQKQRAVIARMFASDPDVFILDEPTTGMDAGSKNEFYELMHHSAHHHGKAVLMITHDPEEVKDYADRNIHLVRNQDSPWRCFNVHENGQEVGHA.

In terms of domain architecture, ABC transporter spans 4–234 (ITVEDLSFYY…HENGQEVGHA (231 aa)). 36 to 43 (GENGAAKT) contributes to the ATP binding site.

Belongs to the ABC transporter superfamily.

Part of the ATP-driven transport system AdcABC for zinc. Required for transformability. The protein is Zinc transport system ATP-binding protein AdcC (adcC) of Streptococcus pneumoniae (strain ATCC BAA-255 / R6).